The chain runs to 192 residues: Ubiquitin-conjugating enzyme E2 T (192 aa).

Residues 2 to 152 (QRVSRLKREL…AKKWTEKHAL (151 aa)) enclose the UBC core domain. Residue Cys86 is the Glycyl thioester intermediate of the active site. The segment at 150-192 (HALPAPQGSDKESQEKSGSSEGTSHKRKSAEIAEESKKPCREP) is disordered. Residues 178–192 (SAEIAEESKKPCREP) are compositionally biased toward basic and acidic residues.

This sequence belongs to the ubiquitin-conjugating enzyme family.

Its subcellular location is the nucleus. It carries out the reaction S-ubiquitinyl-[E1 ubiquitin-activating enzyme]-L-cysteine + [E2 ubiquitin-conjugating enzyme]-L-cysteine = [E1 ubiquitin-activating enzyme]-L-cysteine + S-ubiquitinyl-[E2 ubiquitin-conjugating enzyme]-L-cysteine.. Its pathway is protein modification; protein ubiquitination. Accepts ubiquitin from the E1 complex and catalyzes its covalent attachment to other proteins. Catalyzes monoubiquitination. Involved in DNA repair. This chain is Ubiquitin-conjugating enzyme E2 T (ube2t), found in Xenopus laevis (African clawed frog).